The following is a 335-amino-acid chain: Beta-ketoacyl-[acyl-carrier-protein] synthase III (335 aa).

Residues C118 and H259 contribute to the active site. The segment at 260–264 (QANER) is ACP-binding. N289 is an active-site residue.

Belongs to the thiolase-like superfamily. FabH family. In terms of assembly, homodimer.

Its subcellular location is the cytoplasm. It carries out the reaction malonyl-[ACP] + acetyl-CoA + H(+) = 3-oxobutanoyl-[ACP] + CO2 + CoA. Its pathway is lipid metabolism; fatty acid biosynthesis. Catalyzes the condensation reaction of fatty acid synthesis by the addition to an acyl acceptor of two carbons from malonyl-ACP. Catalyzes the first condensation reaction which initiates fatty acid synthesis and may therefore play a role in governing the total rate of fatty acid production. Possesses both acetoacetyl-ACP synthase and acetyl transacylase activities. Its substrate specificity determines the biosynthesis of branched-chain and/or straight-chain of fatty acids. The chain is Beta-ketoacyl-[acyl-carrier-protein] synthase III from Chlamydia caviae (strain ATCC VR-813 / DSM 19441 / 03DC25 / GPIC) (Chlamydophila caviae).